The primary structure comprises 179 residues: Small ribosomal subunit protein uS7 (179 aa).

It belongs to the universal ribosomal protein uS7 family. Part of the 30S ribosomal subunit. Contacts proteins S9 and S11. Cross-links to IF3 and the P and E site tRNAs.

Its function is as follows. One of the primary rRNA binding proteins, it binds directly to 16S rRNA where it nucleates assembly of the head domain of the 30S subunit. Is located at the subunit interface close to the decoding center, where it has been shown to contact mRNA. Has been shown to contact tRNA in both the P and E sites; it probably blocks exit of the E site tRNA. Functionally, protein S7 is also a translational repressor protein; it regulates the expression of the str operon members to different degrees by binding to its mRNA. This chain is Small ribosomal subunit protein uS7 (rpsG), found in Escherichia coli (strain K12).